A 245-amino-acid chain; its full sequence is Phosphoribosylaminoimidazole-succinocarboxamide synthase (245 aa).

The protein belongs to the SAICAR synthetase family.

The enzyme catalyses 5-amino-1-(5-phospho-D-ribosyl)imidazole-4-carboxylate + L-aspartate + ATP = (2S)-2-[5-amino-1-(5-phospho-beta-D-ribosyl)imidazole-4-carboxamido]succinate + ADP + phosphate + 2 H(+). It participates in purine metabolism; IMP biosynthesis via de novo pathway; 5-amino-1-(5-phospho-D-ribosyl)imidazole-4-carboxamide from 5-amino-1-(5-phospho-D-ribosyl)imidazole-4-carboxylate: step 1/2. In Nostoc punctiforme (strain ATCC 29133 / PCC 73102), this protein is Phosphoribosylaminoimidazole-succinocarboxamide synthase.